The primary structure comprises 156 residues: Translationally controlled tumor protein 2 (156 aa).

In terms of domain architecture, TCTP spans methionine 1–cysteine 156.

This sequence belongs to the TCTP family. Expressed in stems, cauline leaves, minor veins of rosette leaves, roots, lateral root primordia, vascular tissues of petioles and inflorescences, base of siliques, papillae and ovules. Not detected in root meristems, anthers or seeds. Expressed in stomata, trichomes and root cortex.

It is found in the nucleus. The protein resides in the cytoplasm. Regulates proliferation. Induces whole plant regeneration when expressed in heterologous systems. Involved in root growth and lateral root development, with a probable role in cell reprogramming. The long-distance transport of TCTP RNA and/or protein in plants may have an important role in regulation of growth and development. The protein is Translationally controlled tumor protein 2 of Arabidopsis thaliana (Mouse-ear cress).